We begin with the raw amino-acid sequence, 874 residues long: Leucine--tRNA ligase (874 aa).

The 'HIGH' region motif lies at 43–53 (PYPSGRIHIGH). Residues 614 to 634 (LDDGSPVTVGPPEKMSKSKKN) form a disordered region. The 'KMSKS' region motif lies at 627–631 (KMSKS). Lysine 630 provides a ligand contact to ATP.

Belongs to the class-I aminoacyl-tRNA synthetase family.

Its subcellular location is the cytoplasm. It carries out the reaction tRNA(Leu) + L-leucine + ATP = L-leucyl-tRNA(Leu) + AMP + diphosphate. The protein is Leucine--tRNA ligase of Azorhizobium caulinodans (strain ATCC 43989 / DSM 5975 / JCM 20966 / LMG 6465 / NBRC 14845 / NCIMB 13405 / ORS 571).